Reading from the N-terminus, the 224-residue chain is Uridylate kinase (224 aa).

Residue 9-10 (GS) participates in ATP binding. Gly43 lines the UMP pocket. Positions 44 and 48 each coordinate ATP. UMP is bound by residues Asp65 and 113 to 119 (VVPGQTT). Positions 139, 145, and 148 each coordinate ATP.

Belongs to the UMP kinase family. In terms of assembly, homohexamer.

Its subcellular location is the cytoplasm. The catalysed reaction is UMP + ATP = UDP + ADP. It participates in pyrimidine metabolism; CTP biosynthesis via de novo pathway; UDP from UMP (UMPK route): step 1/1. With respect to regulation, inhibited by UTP. Catalyzes the reversible phosphorylation of UMP to UDP. The protein is Uridylate kinase of Methanocella arvoryzae (strain DSM 22066 / NBRC 105507 / MRE50).